A 393-amino-acid chain; its full sequence is Putative competence-damage inducible protein (393 aa).

It belongs to the CinA family.

This is Putative competence-damage inducible protein from Streptococcus suis (strain 05ZYH33).